A 171-amino-acid polypeptide reads, in one-letter code: 3-hydroxydecanoyl-[acyl-carrier-protein] dehydratase (171 aa).

His70 is a catalytic residue.

This sequence belongs to the thioester dehydratase family. FabA subfamily. As to quaternary structure, homodimer.

The protein localises to the cytoplasm. It carries out the reaction a (3R)-hydroxyacyl-[ACP] = a (2E)-enoyl-[ACP] + H2O. The enzyme catalyses (3R)-hydroxydecanoyl-[ACP] = (2E)-decenoyl-[ACP] + H2O. It catalyses the reaction (2E)-decenoyl-[ACP] = (3Z)-decenoyl-[ACP]. It functions in the pathway lipid metabolism; fatty acid biosynthesis. Necessary for the introduction of cis unsaturation into fatty acids. Catalyzes the dehydration of (3R)-3-hydroxydecanoyl-ACP to E-(2)-decenoyl-ACP and then its isomerization to Z-(3)-decenoyl-ACP. Can catalyze the dehydratase reaction for beta-hydroxyacyl-ACPs with saturated chain lengths up to 16:0, being most active on intermediate chain length. This is 3-hydroxydecanoyl-[acyl-carrier-protein] dehydratase from Methylococcus capsulatus (strain ATCC 33009 / NCIMB 11132 / Bath).